Consider the following 256-residue polypeptide: Indole-3-glycerol phosphate synthase (256 aa).

Belongs to the TrpC family.

The catalysed reaction is 1-(2-carboxyphenylamino)-1-deoxy-D-ribulose 5-phosphate + H(+) = (1S,2R)-1-C-(indol-3-yl)glycerol 3-phosphate + CO2 + H2O. It functions in the pathway amino-acid biosynthesis; L-tryptophan biosynthesis; L-tryptophan from chorismate: step 4/5. The sequence is that of Indole-3-glycerol phosphate synthase from Pelodictyon phaeoclathratiforme (strain DSM 5477 / BU-1).